The primary structure comprises 86 residues: Putative membrane protein insertion efficiency factor (86 aa).

The protein belongs to the UPF0161 family.

The protein localises to the cell inner membrane. In terms of biological role, could be involved in insertion of integral membrane proteins into the membrane. This chain is Putative membrane protein insertion efficiency factor, found in Oleidesulfovibrio alaskensis (strain ATCC BAA-1058 / DSM 17464 / G20) (Desulfovibrio alaskensis).